A 149-amino-acid chain; its full sequence is MRSDIGRLSKYLIERKKNLGLTWEDVSRKLGKSPVYCAMLFYGYAQADDEEVKAVAELLNLEEKELAELKDAPYREPQQPVPPTDPFVYRLYEVVILYGPALKDVAHEMFGDGIMSAIDMSVELEKVEQEGAERMVLTFNGKWLKYRKF.

Catalysis depends on residues R90, E93, and S116.

Belongs to the cyanase family.

It carries out the reaction cyanate + hydrogencarbonate + 3 H(+) = NH4(+) + 2 CO2. Its function is as follows. Catalyzes the reaction of cyanate with bicarbonate to produce ammonia and carbon dioxide. The polypeptide is Cyanate hydratase (Aquifex aeolicus (strain VF5)).